The following is a 272-amino-acid chain: Arylesterase (272 aa).

The AB hydrolase-1 domain maps to 21-253 (KPVLFSHGWL…LKVYKDAPHG (233 aa)). Residue Trp29 participates in acetate binding. Residue Ser95 is part of the active site. Met96 contacts acetate. Active-site residues include Asp223 and His252.

The protein belongs to the AB hydrolase superfamily. Bacterial non-heme haloperoxidase / perhydrolase family. As to quaternary structure, dimer of trimers.

It catalyses the reaction a phenyl acetate + H2O = a phenol + acetate + H(+). The catalysed reaction is peracetic acid + H2O = acetate + H2O2 + H(+). It carries out the reaction a percarboxylic acid + H2O = a carboxylate + H2O2 + H(+). Hydrolyzes phenolic esters, such as phenyl acetate, nitrophenyl acetate and naphtyl acetate. Can act on a wide range of esters, but reaction rate and enantioselectivity differ significantly depending on the substrate. Shows a preference for esters with small acyl groups. Also shows low perhydrolase activity, and catalyzes the reversible formation of peroxycarboxylic acids from carboxylic acids and hydrogen peroxide. In vitro, enzyme-generated peracetic acid oxidizes bromide ion to bromonium, which reacts with monochlorodimedone to form bromochlorodimedone. This is Arylesterase from Pseudomonas fluorescens.